Here is a 321-residue protein sequence, read N- to C-terminus: Ribose-phosphate pyrophosphokinase (321 aa).

ATP is bound by residues 44–46 (DGE) and 103–104 (RQ). 2 residues coordinate Mg(2+): His-137 and Asp-179. Lys-202 is a catalytic residue. Residues Arg-204, Asp-228, and 232 to 236 (DTAGT) contribute to the D-ribose 5-phosphate site.

Belongs to the ribose-phosphate pyrophosphokinase family. Class I subfamily. Homohexamer. Mg(2+) serves as cofactor.

The protein resides in the cytoplasm. It catalyses the reaction D-ribose 5-phosphate + ATP = 5-phospho-alpha-D-ribose 1-diphosphate + AMP + H(+). Its pathway is metabolic intermediate biosynthesis; 5-phospho-alpha-D-ribose 1-diphosphate biosynthesis; 5-phospho-alpha-D-ribose 1-diphosphate from D-ribose 5-phosphate (route I): step 1/1. Involved in the biosynthesis of the central metabolite phospho-alpha-D-ribosyl-1-pyrophosphate (PRPP) via the transfer of pyrophosphoryl group from ATP to 1-hydroxyl of ribose-5-phosphate (Rib-5-P). This chain is Ribose-phosphate pyrophosphokinase, found in Staphylococcus haemolyticus (strain JCSC1435).